Here is a 109-residue protein sequence, read N- to C-terminus: uncharacterized protein (109 aa).

The HTH hxlR-type domain maps to Ala10–Met109.

This is an uncharacterized protein from Bacillus subtilis (strain 168).